We begin with the raw amino-acid sequence, 417 residues long: Serine hydroxymethyltransferase (417 aa).

(6S)-5,6,7,8-tetrahydrofolate contacts are provided by residues L121 and G125–L127. Position 229 is an N6-(pyridoxal phosphate)lysine (K229). S355–F357 provides a ligand contact to (6S)-5,6,7,8-tetrahydrofolate.

Belongs to the SHMT family. Homodimer. The cofactor is pyridoxal 5'-phosphate.

The protein localises to the cytoplasm. It carries out the reaction (6R)-5,10-methylene-5,6,7,8-tetrahydrofolate + glycine + H2O = (6S)-5,6,7,8-tetrahydrofolate + L-serine. The protein operates within one-carbon metabolism; tetrahydrofolate interconversion. It participates in amino-acid biosynthesis; glycine biosynthesis; glycine from L-serine: step 1/1. Its function is as follows. Catalyzes the reversible interconversion of serine and glycine with tetrahydrofolate (THF) serving as the one-carbon carrier. This reaction serves as the major source of one-carbon groups required for the biosynthesis of purines, thymidylate, methionine, and other important biomolecules. Also exhibits THF-independent aldolase activity toward beta-hydroxyamino acids, producing glycine and aldehydes, via a retro-aldol mechanism. In Enterobacter sp. (strain 638), this protein is Serine hydroxymethyltransferase.